A 977-amino-acid chain; its full sequence is MSEQATSSGLESRSNGLRERNLQASKSAADRDVASQSLEDKLQVEEGEADTEKKTFGRTPDGTVFTVPPTRDMVSQLLSPSEPKNISDIFVLAILGCHILLLWFLPSSFRVAAFAVIFLFWRASYNIGIGWLLHMQSNGRTLVCWAKKSNIFVNPSTGQNPHPTLYKLLKWELETKISEQYSFEEAPTEYNTWLVFRRVVDLILMCDFTSYCLFAIACGGRPTGESFIMLALRWITGMSLVLFNLWVKLDAHRVVKDFAWYWGDFFYLIDQDLTFDGVFEMAPHPMYSVGYAGYYGISLMAASYKILFISILAHAAQFAFLVLVENPHIEKTYNAPPPRKRVADTDTKPQEDENSHEGSVVSDTLSSAPVIPPLQPSSMHSLLGLHNIDLYRSTDQSVLLAQVLFFALTTLTPSTPVYQFCFVLNAALWRIWYSVGIGYILNRQSNCKMWTRHFVKYGESNHEAWRQWKGTYHLSMTMTYASFIAAAWKMYSFPQDWRYGLVLLRHILGASLIALQIWTSTSIYESLGEFGWFFGDFFFDEFPKLTYSGIYRFLNNPERVLGLAGVWGAVLITSTKSVVFLALLSHTLTLAFIQLVERPHMQKLYGQSLRRDAGLVRSLKRSLPPSLKQIHGSVDKILDDSFEFIEEFIEAARPKLAAGVQTFVKDTSALFQKYPARVTISRLEPDLAGYDLKDYSITLEGTQPSRPAQFERASDKEGERARSMPYRRGEQENLMFEYGAPIKVKWTAPLNHSKKDWVGLYMVTDNTSREVTRVSSQGRWIATNQASFDSETCEQGLISSDIVLKSSRDDGEPRDVASGEMVFSGDKLWWTQGVFEFRYHHNGKHNVMAVSRPFEICIGRFDEDDIEVDNYGLVRAAVEAALLPVVQNCFDRDPEIAPQTVEEHYGCLVDRDGKYSKRVVFAVHHMFGIEFAPEVVRADGNIRNLAWRICNAKKVLAPYSMSRSNGASTPTAAHEED.

The segment covering 1-15 (MSEQATSSGLESRSN) has biased composition (polar residues). The tract at residues 1 to 62 (MSEQATSSGL…KKTFGRTPDG (62 aa)) is disordered. At 1–88 (MSEQATSSGL…SPSEPKNISD (88 aa)) the chain is on the lumenal side. Positions 28–55 (AADRDVASQSLEDKLQVEEGEADTEKKT) are enriched in basic and acidic residues. Residues 89–109 (IFVLAILGCHILLLWFLPSSF) form a helical membrane-spanning segment. Over 110–112 (RVA) the chain is Cytoplasmic. A helical transmembrane segment spans residues 113-133 (AFAVIFLFWRASYNIGIGWLL). Over 134 to 198 (HMQSNGRTLV…EYNTWLVFRR (65 aa)) the chain is Lumenal. Residues 199–219 (VVDLILMCDFTSYCLFAIACG) form a helical membrane-spanning segment. Over 220-226 (GRPTGES) the chain is Cytoplasmic. A helical transmembrane segment spans residues 227–247 (FIMLALRWITGMSLVLFNLWV). At 248 to 280 (KLDAHRVVKDFAWYWGDFFYLIDQDLTFDGVFE) the chain is on the lumenal side. A helical transmembrane segment spans residues 281 to 301 (MAPHPMYSVGYAGYYGISLMA). The Cytoplasmic segment spans residues 302–303 (AS). A helical transmembrane segment spans residues 304–324 (YKILFISILAHAAQFAFLVLV). Residues 325–397 (ENPHIEKTYN…IDLYRSTDQS (73 aa)) are Lumenal-facing. Positions 334 to 366 (NAPPPRKRVADTDTKPQEDENSHEGSVVSDTLS) are disordered. The span at 341–356 (RVADTDTKPQEDENSH) shows a compositional bias: basic and acidic residues. The chain crosses the membrane as a helical span at residues 398 to 418 (VLLAQVLFFALTTLTPSTPVY). Gln-419 is a topological domain (cytoplasmic). Residues 420 to 440 (FCFVLNAALWRIWYSVGIGYI) traverse the membrane as a helical segment. Residues 441–471 (LNRQSNCKMWTRHFVKYGESNHEAWRQWKGT) lie on the Lumenal side of the membrane. Residues 472–488 (YHLSMTMTYASFIAAAW) traverse the membrane as a helical segment. Residues 489 to 498 (KMYSFPQDWR) are Cytoplasmic-facing. The helical transmembrane segment at 499–519 (YGLVLLRHILGASLIALQIWT) threads the bilayer. Topologically, residues 520–562 (STSIYESLGEFGWFFGDFFFDEFPKLTYSGIYRFLNNPERVLG) are lumenal. Residues 563–583 (LAGVWGAVLITSTKSVVFLAL) form a helical membrane-spanning segment. Topologically, residues 584–977 (LSHTLTLAFI…STPTAAHEED (394 aa)) are cytoplasmic. The segment at 703–724 (QPSRPAQFERASDKEGERARSM) is disordered. Over residues 712–724 (RASDKEGERARSM) the composition is skewed to basic and acidic residues.

The protein belongs to the class VI-like SAM-binding methyltransferase superfamily. CHO2 family.

It is found in the endoplasmic reticulum membrane. The enzyme catalyses a 1,2-diacyl-sn-glycero-3-phosphoethanolamine + S-adenosyl-L-methionine = a 1,2-diacyl-sn-glycero-3-phospho-N-methylethanolamine + S-adenosyl-L-homocysteine + H(+). It participates in phospholipid metabolism; phosphatidylcholine biosynthesis. In terms of biological role, catalyzes the first step of the methylation pathway of phosphatidylcholine biosynthesis, the SAM-dependent methylation of phosphatidylethanolamine (PE) to phosphatidylmonomethylethanolamine (PMME). The sequence is that of Phosphatidylethanolamine N-methyltransferase (CHO2) from Ajellomyces dermatitidis (strain ER-3 / ATCC MYA-2586) (Blastomyces dermatitidis).